Here is a 327-residue protein sequence, read N- to C-terminus: Phospho-N-acetylmuramoyl-pentapeptide-transferase (327 aa).

Helical transmembrane passes span 3-23, 51-71, 75-95, 115-135, 140-160, 172-192, 197-217, 223-243, 248-268, and 306-326; these read IALIAGIVTFILTIIGIPAFI, TMGGTVFLLTSVLASFVIGLF, LSNGLIMILFILVLYGVVGFL, LFLQLVGGVVFYFFYNQHGAG, IFTVPVQLGFLYVFFVLFWLI, IDGLASISVVISLVAYAVIAV, FDILIVIISMIGGLLGFFVFN, IFMGDVGSLALGGMLAAISIS, WTLLLIGIVYVFETTSVMMQV, and VDFFFWGIGIVGSLLTLAILY.

This sequence belongs to the glycosyltransferase 4 family. MraY subfamily. Mg(2+) is required as a cofactor.

Its subcellular location is the cell membrane. The enzyme catalyses UDP-N-acetyl-alpha-D-muramoyl-L-alanyl-gamma-D-glutamyl-L-lysyl-D-alanyl-D-alanine + di-trans,octa-cis-undecaprenyl phosphate = Mur2Ac(oyl-L-Ala-gamma-D-Glu-L-Lys-D-Ala-D-Ala)-di-trans,octa-cis-undecaprenyl diphosphate + UMP. Its pathway is cell wall biogenesis; peptidoglycan biosynthesis. Functionally, catalyzes the initial step of the lipid cycle reactions in the biosynthesis of the cell wall peptidoglycan: transfers peptidoglycan precursor phospho-MurNAc-pentapeptide from UDP-MurNAc-pentapeptide onto the lipid carrier undecaprenyl phosphate, yielding undecaprenyl-pyrophosphoryl-MurNAc-pentapeptide, known as lipid I. The protein is Phospho-N-acetylmuramoyl-pentapeptide-transferase of Streptococcus sanguinis (strain SK36).